Here is a 598-residue protein sequence, read N- to C-terminus: Elongation factor 4 (598 aa).

A tr-type G domain is found at 2-183 (KKIRNFCIIA…AIIEKIPPPK (182 aa)). GTP is bound by residues 14-19 (DHGKST) and 130-133 (NKVD).

The protein belongs to the TRAFAC class translation factor GTPase superfamily. Classic translation factor GTPase family. LepA subfamily.

It is found in the cell inner membrane. The enzyme catalyses GTP + H2O = GDP + phosphate + H(+). Its function is as follows. Required for accurate and efficient protein synthesis under certain stress conditions. May act as a fidelity factor of the translation reaction, by catalyzing a one-codon backward translocation of tRNAs on improperly translocated ribosomes. Back-translocation proceeds from a post-translocation (POST) complex to a pre-translocation (PRE) complex, thus giving elongation factor G a second chance to translocate the tRNAs correctly. Binds to ribosomes in a GTP-dependent manner. This is Elongation factor 4 from Flavobacterium johnsoniae (strain ATCC 17061 / DSM 2064 / JCM 8514 / BCRC 14874 / CCUG 350202 / NBRC 14942 / NCIMB 11054 / UW101) (Cytophaga johnsonae).